Here is a 179-residue protein sequence, read N- to C-terminus: MLLANYGACEVDRVRHLEEAFCCIAATRMADIPVVNRALSVEALGFEQCAESAGGSDGEMGILITPWFMNLIWLAPYGPCLGERDASTLPVGKTCMRRFGSHDFEFIGASEPQFGPYQFCSLFSPMFEFANQASARATATEVLRLLRASPDAPLPPTCAPHRDRRGFLFGRRRIEGESL.

The chain is Protein HoxT (hoxT) from Cupriavidus necator (strain ATCC 17699 / DSM 428 / KCTC 22496 / NCIMB 10442 / H16 / Stanier 337) (Ralstonia eutropha).